The primary structure comprises 182 residues: ATP-dependent protease subunit HslV (182 aa).

Residue Thr-12 is part of the active site. Na(+)-binding residues include Gly-167, Cys-170, and Thr-173.

Belongs to the peptidase T1B family. HslV subfamily. In terms of assembly, a double ring-shaped homohexamer of HslV is capped on each side by a ring-shaped HslU homohexamer. The assembly of the HslU/HslV complex is dependent on binding of ATP.

Its subcellular location is the cytoplasm. It catalyses the reaction ATP-dependent cleavage of peptide bonds with broad specificity.. Allosterically activated by HslU binding. Functionally, protease subunit of a proteasome-like degradation complex believed to be a general protein degrading machinery. The protein is ATP-dependent protease subunit HslV of Acidiphilium cryptum (strain JF-5).